The following is a 455-amino-acid chain: Adenylyltransferase and sulfurtransferase MOCS3 (455 aa).

Residues glycine 90, aspartate 111, 118–122 (SNLAR), lysine 135, and 179–180 (DN) each bind ATP. Residues 156-236 (AQALTPATAL…QPPPAETVTN (81 aa)) are interaction with NFS1. Positions 220 and 223 each coordinate Zn(2+). Cysteine 237 acts as the Glycyl thioester intermediate; for adenylyltransferase activity in catalysis. The Zn(2+) site is built by cysteine 295 and cysteine 298. A disulfide bridge connects residues cysteine 314 and cysteine 322. The Rhodanese domain maps to 345–453 (SGSPHLLLDV…WAAKVDGTFP (109 aa)). The active-site Cysteine persulfide intermediate; for sulfurtransferase activity is cysteine 410. Cysteine persulfide is present on cysteine 410.

In the N-terminal section; belongs to the HesA/MoeB/ThiF family. UBA4 subfamily. In terms of assembly, interacts with NFS1. Zn(2+) is required as a cofactor.

It is found in the cytoplasm. It localises to the cytosol. It carries out the reaction [molybdopterin-synthase sulfur-carrier protein]-C-terminal Gly-Gly + ATP + H(+) = [molybdopterin-synthase sulfur-carrier protein]-C-terminal Gly-Gly-AMP + diphosphate. The catalysed reaction is [molybdopterin-synthase sulfur-carrier protein]-C-terminal Gly-Gly-AMP + S-sulfanyl-L-cysteinyl-[cysteine desulfurase] + AH2 = [molybdopterin-synthase sulfur-carrier protein]-C-terminal-Gly-aminoethanethioate + L-cysteinyl-[cysteine desulfurase] + A + AMP + 2 H(+). The protein operates within tRNA modification; 5-methoxycarbonylmethyl-2-thiouridine-tRNA biosynthesis. It participates in cofactor biosynthesis; molybdopterin biosynthesis. Functionally, plays a central role in 2-thiolation of mcm(5)S(2)U at tRNA wobble positions of cytosolic tRNA(Lys), tRNA(Glu) and tRNA(Gln). Also essential during biosynthesis of the molybdenum cofactor. Acts by mediating the C-terminal thiocarboxylation of sulfur carriers URM1 and MOCS2A. Its N-terminus first activates URM1 and MOCS2A as acyl-adenylates (-COAMP), then the persulfide sulfur on the catalytic cysteine is transferred to URM1 and MOCS2A to form thiocarboxylation (-COSH) of their C-terminus. The reaction probably involves hydrogen sulfide that is generated from the persulfide intermediate and that acts as a nucleophile towards URM1 and MOCS2A. Subsequently, a transient disulfide bond is formed. Does not use thiosulfate as sulfur donor; NFS1 acting as a sulfur donor for thiocarboxylation reactions. The chain is Adenylyltransferase and sulfurtransferase MOCS3 from Sus scrofa (Pig).